Reading from the N-terminus, the 496-residue chain is Polyphosphate:AMP phosphotransferase (496 aa).

PPK2 regions lie at residues 11–234 and 269–495; these read IDKD…LQAA and LDKD…YKKD.

This sequence belongs to the polyphosphate kinase 2 (PPK2) family. Class II subfamily. As to quaternary structure, homodimer. Mg(2+) is required as a cofactor.

The catalysed reaction is [phosphate](n) + ADP = [phosphate](n+1) + AMP. Uses inorganic polyphosphate (polyP) as a donor to convert AMP to ADP. Can also convert GMP to GDP, with lower efficiency. Cannot dephosphorylate ADP in the presence of polyP. The sequence is that of Polyphosphate:AMP phosphotransferase from Pseudomonas aeruginosa (strain ATCC 15692 / DSM 22644 / CIP 104116 / JCM 14847 / LMG 12228 / 1C / PRS 101 / PAO1).